The chain runs to 238 residues: Probable rhamnogalacturonate lyase B (238 aa).

Residues 1-19 (MRLRTSLGVASACASVASA) form the signal peptide. Asn-27, Asn-110, and Asn-143 each carry an N-linked (GlcNAc...) asparagine glycan.

This sequence belongs to the polysaccharide lyase 4 family.

The protein resides in the secreted. It catalyses the reaction Endotype eliminative cleavage of L-alpha-rhamnopyranosyl-(1-&gt;4)-alpha-D-galactopyranosyluronic acid bonds of rhamnogalacturonan I domains in ramified hairy regions of pectin leaving L-rhamnopyranose at the reducing end and 4-deoxy-4,5-unsaturated D-galactopyranosyluronic acid at the non-reducing end.. Its function is as follows. Pectinolytic enzymes consist of four classes of enzymes: pectin lyase, polygalacturonase, pectin methylesterase and rhamnogalacturonase. Degrades the rhamnogalacturonan I (RG-I) backbone of pectin. In Aspergillus oryzae (strain ATCC 42149 / RIB 40) (Yellow koji mold), this protein is Probable rhamnogalacturonate lyase B (rglB).